A 93-amino-acid chain; its full sequence is Beta-defensin 128 (93 aa).

The first 18 residues, 1-18, serve as a signal peptide directing secretion; it reads MKLFLVLIILLFEVLTDG. Disulfide bonds link C24–C52, C32–C46, and C36–C53.

This sequence belongs to the beta-defensin family.

Its subcellular location is the secreted. In terms of biological role, has antibacterial activity. This Pongo pygmaeus (Bornean orangutan) protein is Beta-defensin 128 (DEFB128).